A 417-amino-acid chain; its full sequence is MSHWATFKQTATNLWVTLRHDILALAVFLNGLLIFKTIYGMSVNLLDIFHIKAFSELDLSLLANAPLFMLGVFLVLNSIGLLFRAKLAWAISIILLLIALIYTLHFYPWLKFSIGFCIFTLVFLLILRKDFSHSSAAAGTIFAFISFTTLLFYSTYGALYLSEGFNPRIESLMTAFYFSIETMSTVGYGDIVPVSESARLFTISVIISGITVFATSMTSIFGPLIRGGFNKLVKGNNHTMHRKDHFIVCGHSILAINTILQLNQRGQNVTVISNLPEDDIKQLEQRLGDNADVIPGDSNDSSVLKKAGIDRCRAILALSDNDADNAFVVLSAKDMSSDVKTVLAVSDSKNLNKIKMVHPDIILSPQLFGSEILARVLNGEEINNDMLVSMLLNSGHGIFSDNDELETKADSKESAQK.

The Cytoplasmic portion of the chain corresponds to 1-21; that stretch reads MSHWATFKQTATNLWVTLRHD. The chain crosses the membrane as a helical span at residues 22-41; sequence ILALAVFLNGLLIFKTIYGM. The Periplasmic portion of the chain corresponds to 42–63; that stretch reads SVNLLDIFHIKAFSELDLSLLA. Residues 64 to 83 traverse the membrane as a helical segment; it reads NAPLFMLGVFLVLNSIGLLF. At 84–86 the chain is on the cytoplasmic side; it reads RAK. A helical membrane pass occupies residues 87 to 104; the sequence is LAWAISIILLLIALIYTL. Topologically, residues 105–110 are periplasmic; it reads HFYPWL. Residues 111 to 127 traverse the membrane as a helical segment; the sequence is KFSIGFCIFTLVFLLIL. The Cytoplasmic segment spans residues 128–140; that stretch reads RKDFSHSSAAAGT. Residues 141–160 form a helical membrane-spanning segment; the sequence is IFAFISFTTLLFYSTYGALY. At 161-199 the chain is on the periplasmic side; sequence LSEGFNPRIESLMTAFYFSIETMSTVGYGDIVPVSESAR. The Selectivity filter signature appears at 185–190; it reads TVGYGD. Residues 200–220 traverse the membrane as a helical segment; the sequence is LFTISVIISGITVFATSMTSI. The Cytoplasmic segment spans residues 221-417; sequence FGPLIRGGFN…KADSKESAQK (197 aa). The RCK N-terminal domain maps to 243-363; it reads KDHFIVCGHS…IKMVHPDIIL (121 aa).

Belongs to the potassium channel family. Dimer.

The protein localises to the cell inner membrane. Functionally, k(+)-specific ion channel. May play a role in the defense against osmotic shock. The protein is Voltage-gated potassium channel Kch (kch) of Escherichia coli (strain K12).